Here is an 831-residue protein sequence, read N- to C-terminus: Prickle-like protein 1 (831 aa).

One can recognise a PET domain in the interval 14–122; that stretch reads FGCQRSSTSD…TIKLLSRAMM (109 aa). 3 LIM zinc-binding domains span residues 124 to 189, 189 to 249, and 249 to 313; these read AVCE…LLKP, PRCS…LYAE, and EYCE…EDIH. The disordered stretch occupies residues 314 to 346; the sequence is ASDSSDSAFQSARSRDSRRSVRMGRSSRSADQC. Phosphoserine occurs at positions 315, 591, and 594. Disordered stretches follow at residues 664–688 and 763–831; these read EERG…NALN and CSSS…CIIS. Positions 669–680 are enriched in basic residues; it reads RPHHHRHRRSRK. Phosphoserine is present on serine 683. A compositionally biased stretch (polar residues) spans 797-812; that stretch reads DLSSPASALPTPQFNQ. Positions 815 to 831 are enriched in basic residues; it reads TKSKKKKGHRGKNCIIS. Residue cysteine 828 is modified to Cysteine methyl ester. Residue cysteine 828 is the site of S-farnesyl cysteine attachment. Positions 829–831 are cleaved as a propeptide — removed in mature form; sequence IIS.

It belongs to the prickle / espinas / testin family. Interacts with REST.

It localises to the nucleus membrane. It is found in the cytoplasm. Its subcellular location is the cytosol. Involved in the planar cell polarity pathway that controls convergent extension during gastrulation and neural tube closure. Convergent extension is a complex morphogenetic process during which cells elongate, move mediolaterally, and intercalate between neighboring cells, leading to convergence toward the mediolateral axis and extension along the anteroposterior axis. Necessary for nuclear localization of REST. May serve as nuclear receptor. The protein is Prickle-like protein 1 (Prickle1) of Rattus norvegicus (Rat).